The primary structure comprises 501 residues: Group 3 secretory phospholipase A2 (501 aa).

Residues 1–19 form the signal peptide; it reads MGVLVVLLGVLSFLGRTLG. The tract at residues 119 to 139 is disordered; sequence RGPAESPAGTREKRAAGQNGV. Positions 150–291 are phospholipase A2-like; that stretch reads GWTVPGTLWC…SWSSPATSLT (142 aa). W158, G160, and G162 together coordinate Ca(2+). Intrachain disulfides connect C159/C181, C180/C220, C187/C213, and C211/C244. The N-linked (GlcNAc...) asparagine glycan is linked to N167. H184 is a catalytic residue. D185 provides a ligand contact to Ca(2+). D214 is a catalytic residue. N-linked (GlcNAc...) asparagine glycosylation is present at N280. The span at 284-298 shows a compositional bias: polar residues; it reads SSPATSLTPSPQNPA. The interval 284 to 339 is disordered; sequence SSPATSLTPSPQNPALSRPQPMQHPQQWPSEWKESKSPSKTNATALQAPVASPGSD. N-linked (GlcNAc...) asparagine glycans are attached at residues N325 and N403.

Belongs to the phospholipase A2 family. Ca(2+) is required as a cofactor. N-glycosylation does not affect the catalytic activity, but is required for proper secretion. A nonglycosylated form was observed in several cell types. In terms of processing, in several cell types, the N- and C-termini are cleaved off.

It localises to the secreted. The protein resides in the cell membrane. The protein localises to the cytoplasm. It is found in the cytoskeleton. Its subcellular location is the microtubule organizing center. It localises to the centrosome. The protein resides in the centriole. The protein localises to the recycling endosome. The enzyme catalyses a 1,2-diacyl-sn-glycero-3-phosphocholine + H2O = a 1-acyl-sn-glycero-3-phosphocholine + a fatty acid + H(+). It catalyses the reaction 1-hexadecanoyl-2-(9Z,12Z-octadecadienoyl)-sn-glycero-3-phosphocholine + H2O = (9Z,12Z)-octadecadienoate + 1-hexadecanoyl-sn-glycero-3-phosphocholine + H(+). The catalysed reaction is 1-hexadecanoyl-2-(5Z,8Z,11Z,14Z-eicosatetraenoyl)-sn-glycero-3-phosphocholine + H2O = 1-hexadecanoyl-sn-glycero-3-phosphocholine + (5Z,8Z,11Z,14Z)-eicosatetraenoate + H(+). It carries out the reaction 1-hexadecanoyl-2-(9Z,12Z-octadecadienoyl)-sn-glycero-3-phosphoethanolamine + H2O = 1-hexadecanoyl-sn-glycero-3-phosphoethanolamine + (9Z,12Z)-octadecadienoate + H(+). The enzyme catalyses 1-hexadecanoyl-2-(5Z,8Z,11Z,14Z-eicosatetraenoyl)-sn-glycero-3-phosphoethanolamine + H2O = 1-hexadecanoyl-sn-glycero-3-phosphoethanolamine + (5Z,8Z,11Z,14Z)-eicosatetraenoate + H(+). Functionally, secretory calcium-dependent phospholipase A2 that primarily targets extracellular phospholipids. Hydrolyzes the ester bond of the fatty acyl group attached at sn-2 position of phospholipids without apparent head group selectivity. Contributes to phospholipid remodeling of low-density lipoprotein (LDL) and high-density lipoprotein (HDL) particles. Hydrolyzes LDL phospholipids releasing unsaturated fatty acids that regulate macrophage differentiation toward foam cells. May act in an autocrine and paracrine manner. Secreted by immature mast cells, acts on nearby fibroblasts upstream to PTDGS to synthesize prostaglandin D2 (PGD2), which in turn promotes mast cell maturation and degranulation via PTGDR. Secreted by epididymal epithelium, acts on immature sperm cells within the duct, modulating the degree of unsaturation of the fatty acyl components of phosphatidylcholines required for acrosome assembly and sperm cell motility. Facilitates the replacement of fatty acyl chains in phosphatidylcholines in sperm membranes from omega-6 and omega-9 to omega-3 polyunsaturated fatty acids (PUFAs). Coupled to lipoxygenase pathway, may process omega-6 PUFAs to generate oxygenated lipid mediators in the male reproductive tract. At pericentrosomal preciliary compartment, negatively regulates ciliogenesis likely by regulating endocytotic recycling of ciliary membrane protein. Coupled to cyclooxygenase pathway provides arachidonate to generate prostaglandin E2 (PGE2), a potent immunomodulatory lipid in inflammation and tumorigenesis. At colonic epithelial barrier, preferentially hydrolyzes phospholipids having arachidonate and docosahexaenoate at sn-2 position, contributing to the generation of oxygenated metabolites involved in colonic stem cell homeostasis. Releases C16:0 and C18:0 lysophosphatidylcholine subclasses from neuron plasma membranes and promotes neurite outgrowth and neuron survival. This Bos taurus (Bovine) protein is Group 3 secretory phospholipase A2 (PLA2G3).